A 405-amino-acid chain; its full sequence is Potassium channel subfamily K member 13 (405 aa).

Residues 1 to 19 (MAGRGCGCSPGHLNEDNAR) are Cytoplasmic-facing. Residues 20–40 (FLLLAGLILLYLLGGAAVFSA) traverse the membrane as a helical segment. Residues Asn-59 and Asn-65 are each glycosylated (N-linked (GlcNAc...) asparagine). Residues 95–115 (WDFTGAFYFVGTVVSTIGFGM) constitute an intramembrane region (pore-forming). K(+)-binding residues include Thr-110, Ile-111, and Gly-112. The selectivity filter 1 stretch occupies residues 110-115 (TIGFGM). The helical transmembrane segment at 125 to 145 (IFLIFYGLIGCASTILFFNLF) threads the bilayer. Residues 146–193 (LERLITVIACVMRSCHQQQLRRRGAVTQDNMKAPEKGEADSLTGWKPS) are Cytoplasmic-facing. The chain crosses the membrane as a helical span at residues 194–214 (VYYVMLILCLASVAISCGASA). Positions 224 to 244 (YFDSVYFCFVAFSTIGFGDLV) form an intramembrane region, pore-forming. 4 residues coordinate K(+): Thr-237, Ile-238, Gly-239, and Phe-240. The interval 237 to 242 (TIGFGD) is selectivity filter 2. The chain crosses the membrane as a helical span at residues 263-283 (FLILMGVCCIYSLFNVISILI). Residues 284–405 (KQTVNWILRK…NRLAETSGDR (122 aa)) lie on the Cytoplasmic side of the membrane.

Belongs to the two pore domain potassium channel (TC 1.A.1.8) family. In terms of assembly, homodimer. Heterodimer with KCNK12.

The protein resides in the cell membrane. The enzyme catalyses K(+)(in) = K(+)(out). K(+) channel that conducts outward rectifying tonic currents potentiated by purinergic signals. Homo- and heterodimerizes to form functional channels with distinct regulatory and gating properties. Contributes most of K(+) currents at the plasma membrane of resting microglia. Maintains a depolarized membrane potential required for proper ramified microglia morphology and phagocytosis, selectively mediating microglial pruning of presynaptic compartments at hippocampal excitatory synapses. Upon local release of ATP caused by neuronal injury or infection, it is potentiated by P2RY12 and P2RX7 receptor signaling and contributes to ATP-triggered K(+) efflux underlying microglial NLRP3 inflammasome assembly and IL1B release. This is Potassium channel subfamily K member 13 from Mus musculus (Mouse).